The primary structure comprises 483 residues: Cobyric acid synthase (483 aa).

The region spanning 248–434 (ALRVVVPVLP…LHGLFEQPSA (187 aa)) is the GATase cobBQ-type domain. Cys329 functions as the Nucleophile in the catalytic mechanism. His426 is an active-site residue.

The protein belongs to the CobB/CobQ family. CobQ subfamily.

It participates in cofactor biosynthesis; adenosylcobalamin biosynthesis. In terms of biological role, catalyzes amidations at positions B, D, E, and G on adenosylcobyrinic A,C-diamide. NH(2) groups are provided by glutamine, and one molecule of ATP is hydrogenolyzed for each amidation. In Ectopseudomonas mendocina (strain ymp) (Pseudomonas mendocina), this protein is Cobyric acid synthase.